The sequence spans 363 residues: Bonnadiene synthase (363 aa).

Positions 93, 98, 234, 238, and 242 each coordinate Mg(2+).

Belongs to the terpene synthase family. Mg(2+) is required as a cofactor.

It catalyses the reaction (2E,6E,10E)-geranylgeranyl diphosphate = bonnadiene + diphosphate. It functions in the pathway secondary metabolite biosynthesis; terpenoid biosynthesis. In terms of biological role, diterpene synthase that catalyzes the conversion of geranylgeranyl diphosphate (GGPP) to bonnadiene. Cannot use geranyl diphosphate (GPP), farnesyl diphosphate (FPP) and geranylfarnesyl diphosphate (GFPP). The sequence is that of Bonnadiene synthase from Allokutzneria albata (Kibdelosporangium albatum).